Consider the following 492-residue polypeptide: Cytochrome P450 2L1 (492 aa).

Cys436 is a binding site for heme.

The protein belongs to the cytochrome P450 family. Heme serves as cofactor.

The protein localises to the endoplasmic reticulum membrane. Its subcellular location is the microsome membrane. The catalysed reaction is an organic molecule + reduced [NADPH--hemoprotein reductase] + O2 = an alcohol + oxidized [NADPH--hemoprotein reductase] + H2O + H(+). Its function is as follows. Efficient in catalyzing the monooxygenation of benzphetamine, aminopyrine, benzo(a)pyrene, progesterone, and testosterone. The chain is Cytochrome P450 2L1 (CYP2L1) from Panulirus argus (Caribbean spiny lobster).